The sequence spans 422 residues: Adenylosuccinate synthetase (422 aa).

GTP contacts are provided by residues 11–17 (GDEGKGK) and 39–41 (GHT). Aspartate 12 acts as the Proton acceptor in catalysis. Mg(2+) contacts are provided by aspartate 12 and glycine 39. IMP contacts are provided by residues 12–15 (DEGK), 37–40 (NAGH), threonine 129, arginine 143, asparagine 219, threonine 234, and arginine 298. Histidine 40 serves as the catalytic Proton donor. Position 294-300 (294-300 (VTTGRRR)) interacts with substrate. Residues arginine 300, 326-328 (KLD), and 409-411 (GTG) contribute to the GTP site.

Belongs to the adenylosuccinate synthetase family. In terms of assembly, homodimer. Mg(2+) serves as cofactor.

It localises to the cytoplasm. It catalyses the reaction IMP + L-aspartate + GTP = N(6)-(1,2-dicarboxyethyl)-AMP + GDP + phosphate + 2 H(+). It participates in purine metabolism; AMP biosynthesis via de novo pathway; AMP from IMP: step 1/2. Its function is as follows. Plays an important role in the de novo pathway and in the salvage pathway of purine nucleotide biosynthesis. Catalyzes the first committed step in the biosynthesis of AMP from IMP. The protein is Adenylosuccinate synthetase of Ajellomyces capsulatus (strain H143) (Darling's disease fungus).